The chain runs to 943 residues: Calcium-activated chloride channel regulator 2 (943 aa).

The first 31 residues, 1 to 31, serve as a signal peptide directing secretion; sequence MTQRSIAGPICNLKFVTLLVALSSELPFLGA. Topologically, residues 32-901 are extracellular; it reads GVQLQDNGYN…SDPVPARDYL (870 aa). Residues 54-205 form a metalloprotease domain region; sequence NQNLISNIKE…CSSDITGIFV (152 aa). 2 N-linked (GlcNAc...) asparagine glycosylation sites follow: asparagine 74 and asparagine 150. Histidine 164 serves as a coordination point for Zn(2+). Glutamate 165 is an active-site residue. Positions 168 and 175 each coordinate Zn(2+). The N-linked (GlcNAc...) asparagine glycan is linked to asparagine 231. The region spanning 311-483 is the VWFA domain; that stretch reads VVCLVLDVSS…NSMIDAFSRI (173 aa). N-linked (GlcNAc...) asparagine glycosylation is found at asparagine 522 and asparagine 822. A helical transmembrane segment spans residues 902–922; that stretch reads ILKGVLTAMGLIGIICLIIVV. The Cytoplasmic segment spans residues 923–943; sequence THHTLSRKKRADKKENGTKLL.

Belongs to the CLCR family. The 141 kDa mature form is autoproteolytically cleaved by the metalloprotease domain, producing a 109 kDa form and a 35 kDa form. The cleavage is necessary for calcium-activated chloride channel (CaCC) activation activity. Post-translationally, N-glycosylated. Expressed in cornea, skin, vagina, esophagus, and larynx (at protein level). Expressed in trachea and mammary gland. Weakly expressed in testis and kidney. Highly expressed in corneal epithelium, colon and trachea. Moderately expressed in brain, urogenital organs, bladder, uterus and prostate. Highly expressed in tissues containing stratified epithelium including cornea, esophagus, larynx, skin and vagina than those tissues which contain only epithelial monolayers. Expressed in normal breast epithelium but not in breast cancer. Highly expressed during epithelial stratification. Expressed in endothelial cells of lung. Expressed selectively in endothelia of small pulmonary arteries, arterioles, and subpleural and interlobular venules.

It is found in the cell membrane. The protein localises to the basal cell membrane. Its subcellular location is the cell junction. It localises to the secreted. Functionally, plays a role in modulating chloride current across the plasma membrane in a calcium-dependent manner, and cell adhesion. Involved in basal cell adhesion and/or stratification of squamous epithelia. May act as a tumor suppressor in breast and colorectal cancer. Plays a key role for cell adhesion in the beginning stages of lung metastasis via the binding to ITGB4. This chain is Calcium-activated chloride channel regulator 2 (CLCA2), found in Homo sapiens (Human).